The following is a 169-amino-acid chain: Mediator of RNA polymerase II transcription subunit 28 (169 aa).

A disordered region spans residues 1–35 (MFSAQQPGPPPPNQPGAPAGLMSTPPGAKNPSSTL). The stretch at 99 to 137 (EQVIKEDVSELRNELQRKEALIQKHLTKLRSWQQVLEEI) forms a coiled coil.

The protein belongs to the Mediator complex subunit 28 family. As to quaternary structure, component of the Mediator complex.

The protein resides in the nucleus. Its function is as follows. Component of the Mediator complex, a coactivator involved in the regulated transcription of nearly all RNA polymerase II-dependent genes. Mediator functions as a bridge to convey information from gene-specific regulatory proteins to the basal RNA polymerase II transcription machinery. Mediator is recruited to promoters by direct interactions with regulatory proteins and serves as a scaffold for the assembly of a functional preinitiation complex with RNA polymerase II and the general transcription factors. This chain is Mediator of RNA polymerase II transcription subunit 28 (med28), found in Xenopus tropicalis (Western clawed frog).